A 435-amino-acid chain; its full sequence is Salicylate hydroxylase (435 aa).

12 to 41 (RVAIVGGGISGLALALSLCKHSHLNVQLFE) contributes to the FAD binding site.

Requires FAD as cofactor.

It catalyses the reaction salicylate + NADH + O2 + 2 H(+) = catechol + CO2 + NAD(+) + H2O. Its pathway is aromatic compound metabolism; naphthalene degradation. This Pseudomonas putida (Arthrobacter siderocapsulatus) protein is Salicylate hydroxylase (nahG).